The chain runs to 497 residues: Argininosuccinate lyase (497 aa).

Belongs to the lyase 1 family. Argininosuccinate lyase subfamily.

It localises to the cytoplasm. It carries out the reaction 2-(N(omega)-L-arginino)succinate = fumarate + L-arginine. The protein operates within amino-acid biosynthesis; L-arginine biosynthesis; L-arginine from L-ornithine and carbamoyl phosphate: step 3/3. This chain is Argininosuccinate lyase, found in Clavibacter michiganensis subsp. michiganensis (strain NCPPB 382).